Here is a 585-residue protein sequence, read N- to C-terminus: YTH domain-containing family protein 3 (585 aa).

3 disordered regions span residues 1–51 (MSAT…SYPP), 244–277 (KPAK…MNIG), and 304–350 (PQPL…QPQL). At serine 2 the chain carries N-acetylserine. Residues 15-24 (NKVSVQNGSI) show a composition bias toward polar residues. Serine 23 is modified (phosphoserine). Residues 244–254 (KPAKPQPKLKP) show a composition bias toward basic residues. The segment covering 329-350 (QQQQGPQPQAQPHQVQSQQPQL) has biased composition (low complexity). The 135-residue stretch at 416–550 (GRVFIIKSYS…EKAKQVLKII (135 aa)) folds into the YTH domain. Residues 422 to 424 (KSY), aspartate 428, 438 to 439 (WC), asparagine 468, tryptophan 492, and tryptophan 497 contribute to the RNA site.

Belongs to the YTHDF family. YTHDF3 subfamily. Interacts with CNOT1; promoting recruitment of the CCR4-NOT complex. Interacts with YTHDF1. Interacts with YTHDF2. Interacts with PAN3.

It is found in the cytoplasm. Its subcellular location is the cytosol. The protein resides in the P-body. It localises to the stress granule. Specifically recognizes and binds N6-methyladenosine (m6A)-containing RNAs, and regulates their stability. M6A is a modification present at internal sites of mRNAs and some non-coding RNAs and plays a role in mRNA stability and processing. Acts as a regulator of mRNA stability by promoting degradation of m6A-containing mRNAs via interaction with the CCR4-NOT complex or PAN3. The YTHDF paralogs (YTHDF1, YTHDF2 and YTHDF3) share m6A-containing mRNAs targets and act redundantly to mediate mRNA degradation and cellular differentiation. Acts as a negative regulator of type I interferon response by down-regulating interferon-stimulated genes (ISGs) expression: acts by binding to FOXO3 mRNAs. Binds to FOXO3 mRNAs independently of METTL3-mediated m6A modification. Can also act as a regulator of mRNA stability in cooperation with YTHDF2 by binding to m6A-containing mRNA and promoting their degradation. Recognizes and binds m6A-containing circular RNAs (circRNAs); circRNAs are generated through back-splicing of pre-mRNAs, a non-canonical splicing process promoted by dsRNA structures across circularizing exons. Promotes formation of phase-separated membraneless compartments, such as P-bodies or stress granules, by undergoing liquid-liquid phase separation upon binding to mRNAs containing multiple m6A-modified residues: polymethylated mRNAs act as a multivalent scaffold for the binding of YTHDF proteins, juxtaposing their disordered regions and thereby leading to phase separation. The resulting mRNA-YTHDF complexes then partition into different endogenous phase-separated membraneless compartments, such as P-bodies, stress granules or neuronal RNA granules. May also recognize and bind N1-methyladenosine (m1A)-containing mRNAs: inhibits trophoblast invasion by binding to m1A-methylated transcripts of IGF1R, promoting their degradation. This is YTH domain-containing family protein 3 from Mus musculus (Mouse).